Reading from the N-terminus, the 84-residue chain is Small ribosomal subunit protein bS20 (84 aa).

It belongs to the bacterial ribosomal protein bS20 family.

Functionally, binds directly to 16S ribosomal RNA. This is Small ribosomal subunit protein bS20 from Bacteroides fragilis (strain ATCC 25285 / DSM 2151 / CCUG 4856 / JCM 11019 / LMG 10263 / NCTC 9343 / Onslow / VPI 2553 / EN-2).